We begin with the raw amino-acid sequence, 35 residues long: ACGGGGGDVGSLISASLFDQMLKYRNDPRCCXXGF.

Belongs to the glycosyl hydrolase 19 family. Chitinase class I subfamily.

The enzyme catalyses Random endo-hydrolysis of N-acetyl-beta-D-glucosaminide (1-&gt;4)-beta-linkages in chitin and chitodextrins.. Its function is as follows. Defense against chitin-containing fungal pathogens. The sequence is that of Basic endochitinase CH1 from Castanea sativa (Sweet chestnut).